Consider the following 614-residue polypeptide: UvrABC system protein C (614 aa).

The 78-residue stretch at 12–89 (DKPGVYLFRG…IKEHRPRYNV (78 aa)) folds into the GIY-YIG domain. Residues 198-233 (ADLVRGLARKMEAAAANLEFERAAELRDQLRAVEQV) form the UVR domain.

This sequence belongs to the UvrC family. Interacts with UvrB in an incision complex.

It localises to the cytoplasm. The UvrABC repair system catalyzes the recognition and processing of DNA lesions. UvrC both incises the 5' and 3' sides of the lesion. The N-terminal half is responsible for the 3' incision and the C-terminal half is responsible for the 5' incision. This Desulforudis audaxviator (strain MP104C) protein is UvrABC system protein C.